The primary structure comprises 232 residues: Orotidine 5'-phosphate decarboxylase (232 aa).

Substrate contacts are provided by residues Asp11, Lys33, 61–70 (DMKLFDIGAT), Thr116, Arg179, Gln188, Gly208, and Arg209. Lys63 (proton donor) is an active-site residue.

This sequence belongs to the OMP decarboxylase family. Type 1 subfamily. Homodimer.

It carries out the reaction orotidine 5'-phosphate + H(+) = UMP + CO2. It participates in pyrimidine metabolism; UMP biosynthesis via de novo pathway; UMP from orotate: step 2/2. Catalyzes the decarboxylation of orotidine 5'-monophosphate (OMP) to uridine 5'-monophosphate (UMP). The chain is Orotidine 5'-phosphate decarboxylase from Cereibacter sphaeroides (strain ATCC 17023 / DSM 158 / JCM 6121 / CCUG 31486 / LMG 2827 / NBRC 12203 / NCIMB 8253 / ATH 2.4.1.) (Rhodobacter sphaeroides).